A 342-amino-acid polypeptide reads, in one-letter code: MDLSETALAEAVGAARQAFARAGDLDALARLKTEHLGDRAPLALARQALGGVPKDQRADAGKRVNAARAQAQQAYDERLAELRAERDAAVLVAERIDVTLPSTRQPVGARHPITILAEHIADTFIAMGWELAEGPEVEAEQFNFDALNFPADHPARSEQDTFYIAPEGSRQLLRTHTSPVQVRTLLARELPVYVISIGRTFRTDELDATHTPVFHQVEGLAVDRGLSMAHLRGTLDAFARAEFGPQARTRIRPHFFPFTEPSAEVDVWFVGKKGGAGWVEWGGCGMVHPNVLRAAGIDPDVYSGFAFGMGLERTLQFRNGIPDMRDMVEGDMRFSLPFGVGA.

Glutamate 260 serves as a coordination point for Mg(2+).

The protein belongs to the class-II aminoacyl-tRNA synthetase family. Phe-tRNA synthetase alpha subunit type 1 subfamily. In terms of assembly, tetramer of two alpha and two beta subunits. Mg(2+) is required as a cofactor.

The protein localises to the cytoplasm. The catalysed reaction is tRNA(Phe) + L-phenylalanine + ATP = L-phenylalanyl-tRNA(Phe) + AMP + diphosphate + H(+). The protein is Phenylalanine--tRNA ligase alpha subunit of Mycobacterium avium (strain 104).